The primary structure comprises 143 residues: Large ribosomal subunit protein uL11 (143 aa).

This sequence belongs to the universal ribosomal protein uL11 family. In terms of assembly, part of the ribosomal stalk of the 50S ribosomal subunit. Interacts with L10 and the large rRNA to form the base of the stalk. L10 forms an elongated spine to which L12 dimers bind in a sequential fashion forming a multimeric L10(L12)X complex. Post-translationally, one or more lysine residues are methylated.

Functionally, forms part of the ribosomal stalk which helps the ribosome interact with GTP-bound translation factors. This chain is Large ribosomal subunit protein uL11, found in Treponema denticola (strain ATCC 35405 / DSM 14222 / CIP 103919 / JCM 8153 / KCTC 15104).